The following is a 147-amino-acid chain: Hemoglobin anodic subunit beta (147 aa).

Residues 2-147 (EWTDGERTAI…VTSALARQYH (146 aa)) form the Globin domain. The heme b site is built by His-63 and His-92.

The protein belongs to the globin family. In terms of assembly, heterotetramer of two alpha chains and two beta chains. Red blood cells.

In terms of biological role, involved in oxygen transport from gills to the various peripheral tissues. This Gymnothorax unicolor (Brown moray) protein is Hemoglobin anodic subunit beta.